We begin with the raw amino-acid sequence, 115 residues long: Large ribosomal subunit protein bL20c (115 aa).

The protein belongs to the bacterial ribosomal protein bL20 family.

The protein localises to the plastid. The protein resides in the chloroplast. Binds directly to 23S ribosomal RNA and is necessary for the in vitro assembly process of the 50S ribosomal subunit. It is not involved in the protein synthesizing functions of that subunit. The polypeptide is Large ribosomal subunit protein bL20c (Gnetum parvifolium (Small-leaved jointfir)).